Consider the following 235-residue polypeptide: Attacin-E (235 aa).

A signal peptide spans 1-19; it reads MFGKIVFLLLVALCAGVQS. The propeptide occupies 20–47; that stretch reads RYLIVSEPVYYIEHYEEPELLASSRVRR.

This sequence belongs to the attacin/sarcotoxin-2 family. Attacin F appears to be derived by proteolytic digestion of attacin E.

It is found in the secreted. Hemolymph antibacterial protein. The sequence is that of Attacin-E from Hyalophora cecropia (Cecropia moth).